A 373-amino-acid chain; its full sequence is Probable quinol oxidase subunit 2 (373 aa).

Residues 1–19 (MSKFKSLLLLFGSLILLSG) form the signal peptide. The N-palmitoyl cysteine moiety is linked to residue Cys-20. The S-diacylglycerol cysteine moiety is linked to residue Cys-20. 2 helical membrane passes run 38–58 (FLIMYSIIFMLVIIAAVLILF) and 82–102 (LETIWFIIPVIIVIALAIPTV). 2 stretches are compositionally biased toward basic and acidic residues: residues 292–320 (EERTADVLDKPDQPARKPEITNANYERHG) and 339–373 (EESHNMDEMEKISEGAKDEKASKIEKKDHENGGGH). The tract at residues 292–373 (EERTADVLDK…KKDHENGGGH (82 aa)) is disordered.

This sequence belongs to the cytochrome c oxidase subunit 2 family.

Its subcellular location is the cell membrane. The catalysed reaction is 2 a quinol + O2 = 2 a quinone + 2 H2O. Functionally, catalyzes quinol oxidation with the concomitant reduction of oxygen to water. Subunit II transfers the electrons from a quinol to the binuclear center of the catalytic subunit I. The chain is Probable quinol oxidase subunit 2 (qoxA) from Staphylococcus saprophyticus subsp. saprophyticus (strain ATCC 15305 / DSM 20229 / NCIMB 8711 / NCTC 7292 / S-41).